The sequence spans 1284 residues: DNA-directed RNA polymerase subunit beta (1284 aa).

The protein belongs to the RNA polymerase beta chain family. The RNAP catalytic core consists of 2 alpha, 1 beta, 1 beta' and 1 omega subunit. When a sigma factor is associated with the core the holoenzyme is formed, which can initiate transcription.

The catalysed reaction is RNA(n) + a ribonucleoside 5'-triphosphate = RNA(n+1) + diphosphate. DNA-dependent RNA polymerase catalyzes the transcription of DNA into RNA using the four ribonucleoside triphosphates as substrates. The chain is DNA-directed RNA polymerase subunit beta from Mesoplasma florum (strain ATCC 33453 / NBRC 100688 / NCTC 11704 / L1) (Acholeplasma florum).